The primary structure comprises 299 residues: Probable lipid kinase YegS (299 aa).

The DAGKc domain occupies 2–133; the sequence is ANFPASLLIL…IDMAMVNDKT (132 aa). Residues Thr40, 66-72, and Thr95 contribute to the ATP site; that span reads GDGTINE. Positions 215, 218, and 220 each coordinate Mg(2+). Glu271 (proton acceptor) is an active-site residue.

Belongs to the diacylglycerol/lipid kinase family. YegS lipid kinase subfamily. Requires Mg(2+) as cofactor. Ca(2+) is required as a cofactor.

The protein resides in the cytoplasm. Functionally, probably phosphorylates lipids; the in vivo substrate is unknown. This chain is Probable lipid kinase YegS, found in Salmonella choleraesuis (strain SC-B67).